The following is a 104-amino-acid chain: MYAVIATGGKQYRVEKDEVLRLEKLPGQVGDTVSFDQILLFSDGESVSVGTPVLGNVTVSGKIVEQDRAKKILVFKTKRRKRYRRKQGHRQSFTAVRIETIQAG.

This sequence belongs to the bacterial ribosomal protein bL21 family. Part of the 50S ribosomal subunit. Contacts protein L20.

Functionally, this protein binds to 23S rRNA in the presence of protein L20. The sequence is that of Large ribosomal subunit protein bL21 from Desulfosudis oleivorans (strain DSM 6200 / JCM 39069 / Hxd3) (Desulfococcus oleovorans).